We begin with the raw amino-acid sequence, 99 residues long: Small ribosomal subunit protein bS16 (99 aa).

Residues proline 80–alanine 99 form a disordered region.

The protein belongs to the bacterial ribosomal protein bS16 family.

This chain is Small ribosomal subunit protein bS16, found in Thermomicrobium roseum (strain ATCC 27502 / DSM 5159 / P-2).